Here is a 276-residue protein sequence, read N- to C-terminus: Digeranylgeranylglyceryl phosphate synthase (276 aa).

7 helical membrane passes run 14–34, 40–60, 92–112, 146–166, 202–222, 224–244, and 256–276; these read NCIL…GHFP, LLIF…NDYF, FAVG…LGVI, GAVA…AFLV, VGVL…KASV, VGYY…YLIL, and QKLL…AAIV.

This sequence belongs to the UbiA prenyltransferase family. DGGGP synthase subfamily. Mg(2+) serves as cofactor.

It localises to the cell membrane. It catalyses the reaction sn-3-O-(geranylgeranyl)glycerol 1-phosphate + (2E,6E,10E)-geranylgeranyl diphosphate = 2,3-bis-O-(geranylgeranyl)-sn-glycerol 1-phosphate + diphosphate. It participates in membrane lipid metabolism; glycerophospholipid metabolism. In terms of biological role, prenyltransferase that catalyzes the transfer of the geranylgeranyl moiety of geranylgeranyl diphosphate (GGPP) to the C2 hydroxyl of (S)-3-O-geranylgeranylglyceryl phosphate (GGGP). This reaction is the second ether-bond-formation step in the biosynthesis of archaeal membrane lipids. This chain is Digeranylgeranylglyceryl phosphate synthase, found in Thermococcus onnurineus (strain NA1).